The primary structure comprises 353 residues: Photosystem II D2 protein (353 aa).

Residue Thr2 is modified to N-acetylthreonine. Phosphothreonine is present on Thr2. Residues 41-61 (CAYFALGGWFTGTTFVTSWYT) traverse the membrane as a helical segment. His118 is a binding site for chlorophyll a. A helical transmembrane segment spans residues 125 to 141 (GFMLRQFELARSVQLRP). Pheophytin a is bound by residues Gln130 and Asn143. Residues 153 to 166 (VFVSVFLIYPLGQS) form a helical membrane-spanning segment. Residue His198 coordinates chlorophyll a. The helical transmembrane segment at 208 to 228 (AALLCAIHGATVENTLFEDGD) threads the bilayer. Residues His215 and Phe262 each contribute to the a plastoquinone site. His215 serves as a coordination point for Fe cation. His269 lines the Fe cation pocket. A helical transmembrane segment spans residues 279–295 (GLWMSALGVVGLALNLR).

Belongs to the reaction center PufL/M/PsbA/D family. As to quaternary structure, PSII is composed of 1 copy each of membrane proteins PsbA, PsbB, PsbC, PsbD, PsbE, PsbF, PsbH, PsbI, PsbJ, PsbK, PsbL, PsbM, PsbT, PsbX, PsbY, PsbZ, Psb30/Ycf12, at least 3 peripheral proteins of the oxygen-evolving complex and a large number of cofactors. It forms dimeric complexes. The D1/D2 heterodimer binds P680, chlorophylls that are the primary electron donor of PSII, and subsequent electron acceptors. It shares a non-heme iron and each subunit binds pheophytin, quinone, additional chlorophylls, carotenoids and lipids. There is also a Cl(-1) ion associated with D1 and D2, which is required for oxygen evolution. The PSII complex binds additional chlorophylls, carotenoids and specific lipids. serves as cofactor.

Its subcellular location is the plastid. The protein localises to the chloroplast thylakoid membrane. The enzyme catalyses 2 a plastoquinone + 4 hnu + 2 H2O = 2 a plastoquinol + O2. Photosystem II (PSII) is a light-driven water:plastoquinone oxidoreductase that uses light energy to abstract electrons from H(2)O, generating O(2) and a proton gradient subsequently used for ATP formation. It consists of a core antenna complex that captures photons, and an electron transfer chain that converts photonic excitation into a charge separation. The D1/D2 (PsbA/PsbD) reaction center heterodimer binds P680, the primary electron donor of PSII as well as several subsequent electron acceptors. D2 is needed for assembly of a stable PSII complex. The chain is Photosystem II D2 protein from Coffea arabica (Arabian coffee).